A 119-amino-acid chain; its full sequence is MARVKGGTVTRKRRKKVLKLAKGYYGSKHTLFKSAKEQVMNSYYYAFRDRRQKKRDFRKLWIARINAAARMNGLSYSKLMHGLKLAEIDINRKMLADLAVNDAAAFTALAEQAKDALSK.

Belongs to the bacterial ribosomal protein bL20 family.

Its function is as follows. Binds directly to 23S ribosomal RNA and is necessary for the in vitro assembly process of the 50S ribosomal subunit. It is not involved in the protein synthesizing functions of that subunit. This chain is Large ribosomal subunit protein bL20, found in Enterococcus faecalis (strain ATCC 700802 / V583).